The primary structure comprises 1315 residues: Probable nucleoporin C890.06 (1315 aa).

The protein belongs to the non-repetitive/WGA-negative nucleoporin family.

The protein resides in the cytoplasm. Its subcellular location is the nucleus. This chain is Probable nucleoporin C890.06, found in Schizosaccharomyces pombe (strain 972 / ATCC 24843) (Fission yeast).